The primary structure comprises 255 residues: 2-dehydro-3,6-dideoxy-6-sulfogluconate aldolase (255 aa).

The active-site Proton acceptor is His-38. Positions 141 and 167 each coordinate a divalent metal cation.

Belongs to the HpcH/HpaI aldolase family. In terms of assembly, homohexamer; trimer of dimers. A divalent metal cation is required as a cofactor.

It catalyses the reaction 2-dehydro-3,6-dideoxy-6-sulfo-D-gluconate = (2S)-3-sulfolactaldehyde + pyruvate. Catalyzes the retro-aldol cleavage of 2-dehydro-3,6-dideoxy-6-sulfo-D-gluconate to (2S)-3-sulfolactaldehyde and pyruvate. Is involved in a degradation pathway of sulfoquinovose (SQ) that allows P.putida SQ1 to use SQ as the sole carbon and energy source for growth. The protein is 2-dehydro-3,6-dideoxy-6-sulfogluconate aldolase of Pseudomonas putida (Arthrobacter siderocapsulatus).